Reading from the N-terminus, the 567-residue chain is Urease subunit alpha (567 aa).

The Urease domain maps to glycine 128 to phenylalanine 567. Histidine 133, histidine 135, and lysine 216 together coordinate Ni(2+). Lysine 216 bears the N6-carboxylysine mark. A substrate-binding site is contributed by histidine 218. The Ni(2+) site is built by histidine 245 and histidine 271. Histidine 319 serves as the catalytic Proton donor. Aspartate 359 provides a ligand contact to Ni(2+).

This sequence belongs to the metallo-dependent hydrolases superfamily. Urease alpha subunit family. In terms of assembly, heterotrimer of UreA (gamma), UreB (beta) and UreC (alpha) subunits. Three heterotrimers associate to form the active enzyme. The cofactor is Ni cation. Carboxylation allows a single lysine to coordinate two nickel ions.

The protein resides in the cytoplasm. It catalyses the reaction urea + 2 H2O + H(+) = hydrogencarbonate + 2 NH4(+). It functions in the pathway nitrogen metabolism; urea degradation; CO(2) and NH(3) from urea (urease route): step 1/1. This Pseudoalteromonas translucida (strain TAC 125) protein is Urease subunit alpha.